We begin with the raw amino-acid sequence, 171 residues long: Tubulin polymerization-promoting protein family member 2 (171 aa).

A disordered region spans residues Leu120 to Asn171. The span at Thr129–Val149 shows a compositional bias: basic and acidic residues.

This sequence belongs to the TPPP family.

Its subcellular location is the cytoplasm. The protein localises to the cytosol. It localises to the cell projection. It is found in the cilium. The protein resides in the flagellum. Probable regulator of microtubule dynamics required for sperm motility. In contrast to other members of the family, has no microtubule bundling activity. The polypeptide is Tubulin polymerization-promoting protein family member 2 (Bos taurus (Bovine)).